Here is a 365-residue protein sequence, read N- to C-terminus: Chorismate synthase (365 aa).

Residues arginine 48 and arginine 54 each contribute to the NADP(+) site. FMN contacts are provided by residues 125 to 127 (RAS), 237 to 238 (NA), glycine 277, 292 to 296 (KPTSS), and arginine 318.

This sequence belongs to the chorismate synthase family. As to quaternary structure, homotetramer. Requires FMNH2 as cofactor.

It carries out the reaction 5-O-(1-carboxyvinyl)-3-phosphoshikimate = chorismate + phosphate. It participates in metabolic intermediate biosynthesis; chorismate biosynthesis; chorismate from D-erythrose 4-phosphate and phosphoenolpyruvate: step 7/7. Its function is as follows. Catalyzes the anti-1,4-elimination of the C-3 phosphate and the C-6 proR hydrogen from 5-enolpyruvylshikimate-3-phosphate (EPSP) to yield chorismate, which is the branch point compound that serves as the starting substrate for the three terminal pathways of aromatic amino acid biosynthesis. This reaction introduces a second double bond into the aromatic ring system. The sequence is that of Chorismate synthase from Polaromonas sp. (strain JS666 / ATCC BAA-500).